The primary structure comprises 443 residues: Citrate transporter CitP (443 aa).

13 helical membrane passes run 27-47 (ISGI…IAIS), 59-79 (IFAL…LPIF), 83-103 (LGGG…TNVM), 114-134 (FING…SSLF), 151-171 (VAFI…VIIG), 177-197 (AILY…IVPL), 209-229 (SAGI…LAII), 268-288 (YVQL…GTML), 294-314 (GINA…FGLL), 322-342 (VIMF…AGVG), 350-370 (VLLA…IVAI), 388-410 (AAIT…VLAA), and 422-442 (MGNR…VTFM).

This sequence belongs to the 2-hydroxycarboxylate transporter (2-HCT) (TC 2.A.24) family.

It localises to the cell membrane. It carries out the reaction (R)-lactate(in) + citrate(out) = (R)-lactate(out) + citrate(in). It catalyses the reaction (S)-lactate(in) + citrate(out) = (S)-lactate(out) + citrate(in). The catalysed reaction is citrate(in) + H(+)(in) = citrate(out) + H(+)(out). With respect to regulation, uptake of citrate is not affected by the absence or presence of Na(+) up to 25 mM and is increasingly inhibited by increasing Mg(2+) concentrations. In terms of biological role, secondary transporter involved in citrate metabolism. During cometabolism of citrate and glucose, catalyzes the uptake of divalent citrate into the cell coupled to the exit of monovalent lactate, a product of citrate fermentation during citrate-glucose cometabolism (precursor/product exchange). The citrate/lactate exchange is electrogenic and results in the generation of a membrane potential. In the absence of glucose, i.e. when no lactate is produced, CitP catalyzes the proton-dependent transport of citrate and malate. Transports the divalent form of citrate and malate with the concomitant uptake of one proton, therefore translocating a single unit of negative charge across the membrane. In vitro, transports a range of substrates that contain the 2-hydroxycarboxylate motif, HO-CR(2)-COO(-), with a preference for malate, citrate and monovalent 2-hydroxyisobutyrate. Modification of the OH or the COO(-) groups of the 2-hydroxycarboxylate motif drastically reduces the affinity of the transporter for the substrates, indicating their relevance in substrate recognition. Significant activity is also observed with some 2-oxocarboxylates and a 3-hydroxycarboxylate. This chain is Citrate transporter CitP, found in Leuconostoc mesenteroides subsp. mesenteroides.